The primary structure comprises 555 residues: Formate--tetrahydrofolate ligase (555 aa).

ATP is bound at residue 65–72 (TPAGEGKS).

Belongs to the formate--tetrahydrofolate ligase family.

The catalysed reaction is (6S)-5,6,7,8-tetrahydrofolate + formate + ATP = (6R)-10-formyltetrahydrofolate + ADP + phosphate. It functions in the pathway one-carbon metabolism; tetrahydrofolate interconversion. The sequence is that of Formate--tetrahydrofolate ligase from Staphylococcus aureus (strain NCTC 8325 / PS 47).